The chain runs to 261 residues: MFSPLTDLSRARILLSNDDGFEAEGLAVLERVARTLSDDVWIVAPETEQSGAGHALTIHDPLRFRARGEKRFSVRGTPTDCVLVAVNHLMDRPPDLVVSGINRGGNLGEDVHYSGTVAAAMEGTLLGLRAIALSQVFETNGTGIADPFQVAATHASDVIRRVCGRPWNRQVLINVNFPDCPLDAVTGIELKRQGRRKMGDDIEERRDPRDRPYLWIGAQRKEDRKTAGTDMEAISRGAITVTPLCVDMTDLPTIEALTGAF.

A divalent metal cation contacts are provided by Asp18, Asp19, Ser50, and Asn102.

It belongs to the SurE nucleotidase family. A divalent metal cation serves as cofactor.

The protein localises to the cytoplasm. The catalysed reaction is a ribonucleoside 5'-phosphate + H2O = a ribonucleoside + phosphate. Nucleotidase that shows phosphatase activity on nucleoside 5'-monophosphates. This Rhodospirillum rubrum (strain ATCC 11170 / ATH 1.1.1 / DSM 467 / LMG 4362 / NCIMB 8255 / S1) protein is 5'-nucleotidase SurE.